The chain runs to 524 residues: Putative mediator of RNA polymerase II transcription subunit 8 (524 aa).

Coiled-coil stretches lie at residues 117–146 (LKLHIKSFNDRIDKVDQEFENKIQQISKHK) and 175–211 (NAQQQLAQQQQQQATINALQQQQRLLNAQQQQQQQQQ). Disordered stretches follow at residues 312–340 (VASPQQQVTSKQVPIQSTNKPLPQQQPSI), 356–379 (LPNTTSPPVNNNNQSPINSGIGGG), and 430–451 (QQNQQNQQNQQNQQIHQHIQHL). The span at 314 to 333 (SPQQQVTSKQVPIQSTNKPL) shows a compositional bias: polar residues. The segment covering 356 to 374 (LPNTTSPPVNNNNQSPINS) has biased composition (low complexity). Positions 398-478 (IQQQIQLQQQ…LQQQFQQQQL (81 aa)) form a coiled coil.

The protein belongs to the Mediator complex subunit 8 family. As to quaternary structure, component of the Mediator complex. May be part of a multisubunit E3 ubiquitin-protein ligase complex.

It is found in the nucleus. It participates in protein modification; protein ubiquitination. Its function is as follows. Component of the Mediator complex, a coactivator involved in the regulated transcription of nearly all RNA polymerase II-dependent genes. Mediator functions as a bridge to convey information from gene-specific regulatory proteins to the basal RNA polymerase II transcription machinery. Mediator is recruited to promoters by direct interactions with regulatory proteins and serves as a scaffold for the assembly of a functional preinitiation complex with RNA polymerase II and the general transcription factors. May play a role as a target recruitment subunit in E3 ubiquitin-protein ligase complexes and thus in ubiquitination and subsequent proteasomal degradation of target proteins. This chain is Putative mediator of RNA polymerase II transcription subunit 8 (med8), found in Dictyostelium discoideum (Social amoeba).